Here is a 367-residue protein sequence, read N- to C-terminus: Chorismate synthase (367 aa).

Arginine 48 contributes to the NADP(+) binding site. FMN contacts are provided by residues 125–127 (RSS), 238–239 (NA), glycine 278, 293–297 (KPTSS), and arginine 319.

The protein belongs to the chorismate synthase family. In terms of assembly, homotetramer. It depends on FMNH2 as a cofactor.

The enzyme catalyses 5-O-(1-carboxyvinyl)-3-phosphoshikimate = chorismate + phosphate. The protein operates within metabolic intermediate biosynthesis; chorismate biosynthesis; chorismate from D-erythrose 4-phosphate and phosphoenolpyruvate: step 7/7. Its function is as follows. Catalyzes the anti-1,4-elimination of the C-3 phosphate and the C-6 proR hydrogen from 5-enolpyruvylshikimate-3-phosphate (EPSP) to yield chorismate, which is the branch point compound that serves as the starting substrate for the three terminal pathways of aromatic amino acid biosynthesis. This reaction introduces a second double bond into the aromatic ring system. This is Chorismate synthase from Halorhodospira halophila (strain DSM 244 / SL1) (Ectothiorhodospira halophila (strain DSM 244 / SL1)).